The chain runs to 500 residues: MLSTSPSRSFKNKFRAAFWPVHNYELGKFIPISALMFCILFNQNILRILKDSILISEISAEIAGFAKVYCVTPVAALFVIIYAKMINHLTFEKIFYYLSAFFISCFILFAFVIYPNIHIFHVHPDTLSDWMNKYPHFKWYISLVGNWGYIVYYSLAELWPNIFYVLLFWQFTNELTTTEEAKRFYTLFSLFGNSSLILVGFLMMNLSSEDTIIKKFISISDSKITLVQVSTTIIAIVAIICCLLVRFISKYIFTNPLFYHKTKSSRSTAQRMGLIKSFKYIVKSKYLWLLLICSAAFGFAINLVEAVWKAKIKELYPTVNTYAEFNSLYILWTGVAIIVMTIIGNNVMRMHNWFVAAVISPVIIMVTGVLFFGLIVFDQQILSLFDGAILMSPLALAVSIGGIQNILAKGTKYSIWDTSREMLYIPLDDELKTKGKAAVDVISAKVGKSSSGLVQSIIFTLVPNATFTSISPILMVVFTFVCFAWIYAVRKIYFEYQKIA.

11 helical membrane passes run 26–46 (LGKF…QNIL), 62–82 (IAGF…VIIY), 94–114 (IFYY…FVIY), 149–169 (YIVY…LLFW), 184–204 (FYTL…FLMM), 224–244 (ITLV…CCLL), 287–307 (LWLL…VEAV), 328–348 (LYIL…NNVM), 357–377 (AVIS…LIVF), 381–401 (ILSL…VSIG), and 469–489 (SISP…IYAV).

The protein belongs to the ADP/ATP translocase tlc family.

The protein resides in the cell membrane. In terms of biological role, provides the rickettsial cell with host ATP in exchange for rickettsial ADP. This is an obligate exchange system. This energy acquiring activity is an important component of rickettsial parasitism. In Rickettsia prowazekii (strain Madrid E), this protein is ADP,ATP carrier protein 5 (tlcE).